The following is a 198-amino-acid chain: Ribonuclease HII (198 aa).

The 191-residue stretch at 2 to 192 folds into the RNase H type-2 domain; the sequence is MYYCGIDEAG…IKKIIDNQKN (191 aa). Positions 8, 9, and 101 each coordinate a divalent metal cation.

The protein belongs to the RNase HII family. The cofactor is Mn(2+). It depends on Mg(2+) as a cofactor.

Its subcellular location is the cytoplasm. The enzyme catalyses Endonucleolytic cleavage to 5'-phosphomonoester.. In terms of biological role, endonuclease that specifically degrades the RNA of RNA-DNA hybrids. The sequence is that of Ribonuclease HII from Natranaerobius thermophilus (strain ATCC BAA-1301 / DSM 18059 / JW/NM-WN-LF).